Consider the following 359-residue polypeptide: Outer membrane protein A (359 aa).

The signal sequence occupies residues 1–21 (MKKTAIALAVALAGFATVAQA). 8 beta stranded membrane passes run 27–37 (TWYTGAKLGWS), 62–73 (QLGAGAFLGYQA), 77–85 (LGFELGYDW), 103–114 (QGVQLAAKLSYP), 119–127 (LDIYTRLGG), 154–163 (PLAAVGVEYA), 168–175 (WATRLDYQ), and 194–202 (MLSLGVSYR). Tandem repeats lie at residues 210 to 211 (AP), 212 to 213 (AP), 214 to 215 (AP), 216 to 217 (AP), and 218 to 219 (AP). The 5 X 2 AA tandem repeats of A-P stretch occupies residues 210-219 (APAPAPAPAP). Positions 221-351 (VETKRFTLKS…RVEIEVKGIK (131 aa)) constitute an OmpA-like domain. Cys-322 and Cys-336 are oxidised to a cystine.

The protein belongs to the outer membrane OOP (TC 1.B.6) superfamily. OmpA family. Monomer and homodimer.

The protein localises to the cell outer membrane. With TolR probably plays a role in maintaining the position of the peptidoglycan cell wall in the periplasm. Acts as a porin with low permeability that allows slow penetration of small solutes; an internal gate slows down solute passage. The protein is Outer membrane protein A of Serratia marcescens.